A 581-amino-acid chain; its full sequence is Polypeptide N-acetylgalactosaminyltransferase 12 (581 aa).

Over 1-19 (MWGRTARRRCPRELRRGRE) the chain is Cytoplasmic. A helical; Signal-anchor for type II membrane protein membrane pass occupies residues 20–37 (ALLVLLALLALAGLGSVL). Residues 38-581 (RAQRGAGAGA…QKWFFKERML (544 aa)) lie on the Lumenal side of the membrane. A disordered region spans residues 43–67 (AGAGAAEPGPPRTPRPGRREPVMPR). Disulfide bonds link cysteine 125–cysteine 358, cysteine 349–cysteine 422, cysteine 458–cysteine 479, cysteine 506–cysteine 521, and cysteine 547–cysteine 566. The interval 135 to 244 (LPRTSVIIAF…EGWLEPLLQR (110 aa)) is catalytic subdomain A. Residues aspartate 176 and arginine 205 each contribute to the substrate site. Positions 228 and 230 each coordinate Mn(2+). Residues 304 to 366 (VIRSPTMAGG…PCSHVGHVFP (63 aa)) form a catalytic subdomain B region. Tryptophan 335 serves as a coordination point for substrate. Histidine 363 contacts Mn(2+). Residue tyrosine 371 coordinates substrate. Residues 445–577 (FFGMLQNKGL…NSDHQKWFFK (133 aa)) enclose the Ricin B-type lectin domain.

This sequence belongs to the glycosyltransferase 2 family. GalNAc-T subfamily. Mn(2+) is required as a cofactor. As to expression, widely expressed at different levels of expression. Highly expressed in digestive organs such as small intestine, stomach, pancreas and colon. Expressed at intermediate level in testis, thyroid gland and spleen. Weakly expressed in whole brain, cerebral cortex, cerebellum, fetal brain, bone marrow, thymus, leukocytes, heart, skeletal muscle, liver, lung, esophagus, kidney, adrenal gland, mammary gland, uterus, placenta, ovary and prostate.

Its subcellular location is the golgi apparatus membrane. It catalyses the reaction L-seryl-[protein] + UDP-N-acetyl-alpha-D-galactosamine = a 3-O-[N-acetyl-alpha-D-galactosaminyl]-L-seryl-[protein] + UDP + H(+). The enzyme catalyses L-threonyl-[protein] + UDP-N-acetyl-alpha-D-galactosamine = a 3-O-[N-acetyl-alpha-D-galactosaminyl]-L-threonyl-[protein] + UDP + H(+). Its pathway is protein modification; protein glycosylation. Functionally, catalyzes the initial reaction in O-linked oligosaccharide biosynthesis, the transfer of an N-acetyl-D-galactosamine residue to a serine or threonine residue on the protein receptor. Has activity toward non-glycosylated peptides such as Muc5AC, Muc1a and EA2, and no detectable activity with Muc2 and Muc7. Displays enzymatic activity toward the Gal-NAc-Muc5AC glycopeptide, but no detectable activity to mono-GalNAc-glycosylated Muc1a, Muc2, Muc7 and EA2. May play an important role in the initial step of mucin-type oligosaccharide biosynthesis in digestive organs. This chain is Polypeptide N-acetylgalactosaminyltransferase 12 (GALNT12), found in Homo sapiens (Human).